A 155-amino-acid chain; its full sequence is Reticulon-like protein B23 (155 aa).

The 155-residue stretch at 1 to 155 (MGEMGKAIGL…LNRRNGEILD (155 aa)) folds into the Reticulon domain. Transmembrane regions (helical) follow at residues 30–50 (SLIS…GLLF) and 117–137 (IISG…SMLF).

It is found in the endoplasmic reticulum membrane. This Arabidopsis thaliana (Mouse-ear cress) protein is Reticulon-like protein B23 (RTNLB23).